The following is a 166-amino-acid chain: Putative transmembrane protein ORF166 (166 aa).

The next 3 membrane-spanning stretches (helical) occupy residues 35 to 55 (IILVFLITMPVRFFICIFAGL), 60 to 80 (PICVLINLLPPLAIAIPFVTA), and 124 to 144 (IFCLVGIIIADVLNPILAFIN).

The protein localises to the host membrane. This Acidianus convivator (ABV) protein is Putative transmembrane protein ORF166.